Consider the following 339-residue polypeptide: Nitrilase (339 aa).

A CN hydrolase domain is found at 7–277 (YRVAAVQASP…EGITYADIDL (271 aa)). Catalysis depends on E47, which acts as the Proton acceptor. K128 acts as the Proton donor in catalysis. The active-site Nucleophile is the C162.

This sequence belongs to the carbon-nitrogen hydrolase superfamily. Nitrilase family.

The catalysed reaction is a nitrile + 2 H2O = a carboxylate + NH4(+). The chain is Nitrilase (nit) from Bacillus sp. (strain OxB-1).